A 1035-amino-acid chain; its full sequence is Potassium-transporting ATPase alpha chain 1 (1035 aa).

Positions 1-41 are disordered; sequence MGKADNYELYSVELGPGPGGDMAAKMSKKKKAGGGGGKRKE. Residues 1 to 98 lie on the Cytoplasmic side of the membrane; it reads MGKADNYELY…NALRPPRGTP (98 aa). Tyrosine 7 and tyrosine 10 each carry phosphotyrosine. A compositionally biased stretch (basic residues) spans 26–40; that stretch reads MSKKKKAGGGGGKRK. Phosphoserine is present on serine 27. Residues 99-119 traverse the membrane as a helical segment; that stretch reads EYVKFARQLAGGLQCLMWVAA. Topologically, residues 120–142 are lumenal; it reads AICLIAFAIQASEGDLTTDDNLY. A helical membrane pass occupies residues 143 to 163; it reads LALALIAVVVVTGCFGYYQEF. Residues 164 to 299 are Cytoplasmic-facing; it reads KSTNIIASFK…NEKTPIAIEI (136 aa). Residues 300-319 form a helical membrane-spanning segment; the sequence is EHFVDIIAGLAILFGATFFV. Topologically, residues 320–331 are lumenal; the sequence is VAMCIGYTFLRA. A helical transmembrane segment spans residues 332–349; it reads MVFFMAIVVAYVPEGLLA. Valine 340, alanine 341, valine 343, and glutamate 345 together coordinate K(+). Topologically, residues 350 to 783 are cytoplasmic; it reads TVTVCLSLTA…EQGRLIFDNL (434 aa). Aspartate 387 (4-aspartylphosphate intermediate) is an active-site residue. 2 residues coordinate Mg(2+): aspartate 387 and threonine 389. Residues serine 463 and serine 601 each carry the phosphoserine modification. Mg(2+) is bound by residues aspartate 728 and aspartate 732. The chain crosses the membrane as a helical span at residues 784–803; sequence KKSIAYTLTKNIPELTPYLI. Glutamate 797 is a binding site for K(+). The Lumenal segment spans residues 804–813; sequence YITVSVPLPL. A helical transmembrane segment spans residues 814–834; it reads GCITILFIELCTDIFPSVSLA. A K(+)-binding site is contributed by glutamate 822. Residues 835-854 are Cytoplasmic-facing; sequence YEKAESDIMHLRPRNPKRDR. At serine 840 the chain carries Phosphoserine. The chain crosses the membrane as a helical span at residues 855–877; the sequence is LVNEPLAAYSYFQIGAIQSFAGF. The Lumenal portion of the chain corresponds to 878–929; the sequence is TDYFTAMAQEGWFPLLCVGLRPQWEDHHLQDLQDSYGQEWTFGQRLYQQYTC. Residues 930–949 traverse the membrane as a helical segment; it reads YTVFFISIEMCQIADVLIRK. At 950-963 the chain is on the cytoplasmic side; it reads TRRLSAFQQGFFRN. Phosphoserine; by PKA is present on serine 954. The chain crosses the membrane as a helical span at residues 964–982; sequence RILVIAIVFQVCIGCFLCY. Residues 983 to 997 are Lumenal-facing; that stretch reads CPGMPNIFNFMPIRF. A helical transmembrane segment spans residues 998–1018; the sequence is QWWLVPMPFGLLIFVYDEIRK. The Cytoplasmic portion of the chain corresponds to 1019–1035; that stretch reads LGVRCCPGSWWDQELYY.

This sequence belongs to the cation transport ATPase (P-type) (TC 3.A.3) family. Type IIC subfamily. The gastric H(+)/K(+) ATPase pump is composed of the catalytic alpha subunit ATP4A and the regulatory beta subunit ATP4B. Interacts (via the P-domain) with ATP4B (via N-terminus); this interaction stabilizes the lumenal-open E2 conformation state and prevents the reverse reaction of the transport cycle.

Its subcellular location is the apical cell membrane. The protein localises to the cell membrane. It carries out the reaction K(+)(out) + ATP + H2O + H(+)(in) = K(+)(in) + ADP + phosphate + 2 H(+)(out). Functionally, the catalytic subunit of the gastric H(+)/K(+) ATPase pump which transports H(+) ions in exchange for K(+) ions across the apical membrane of parietal cells. Uses ATP as an energy source to pump H(+) ions to the gastric lumen while transporting K(+) ion from the lumen into the cell. Remarkably generates a million-fold proton gradient across the gastric parietal cell membrane, acidifying the gastric juice down to pH 1. Within a transport cycle, the transfer of a H(+) ion across the membrane is coupled to ATP hydrolysis and is associated with a transient phosphorylation that shifts the pump conformation from inward-facing (E1) to outward-facing state (E2). The release of the H(+) ion in the stomach lumen is followed by binding of K(+) ion converting the pump conformation back to the E1 state. The sequence is that of Potassium-transporting ATPase alpha chain 1 (ATP4A) from Oryctolagus cuniculus (Rabbit).